Consider the following 193-residue polypeptide: Transcriptional activator GvpE2 (193 aa).

Residue 143 to 148 (KRKVYR) coordinates DNA. A leucine-zipper region spans residues 153-184 (QAAIEHVDSVVLQLLTFAVGLQTIMADCIVNQ).

As to quaternary structure, homodimer. Interacts with endogenous GvpD, also with GvpD from H.mediterranei.

The protein resides in the cytoplasm. Its activity is regulated as follows. Degraded once GvpD is translated; degradation requires 'Arg-494' of GvpD; tested in transgenic H.volcanii. Fusion of green fluorescent protein to its C-terminus partially protects it from degradation. Functionally, plays a regulatory role in gas vesicle synthesis, required to activate transcription of the c-gvpA operon. Gas vesicles are hollow, gas filled proteinaceous nanostructures found in several microbial planktonic microorganisms. They allow positioning of halobacteria at the optimal depth for growth in the poorly aerated, shallow brine pools of their habitat. Its function is as follows. Expression of 2 c-vac DNA fragments containing 2 divergently transcribed regions (gvpE-gvpF-gvpG-gvpH-gvpI-gvpJ-gvpK-gvpL-gvpM and gvpA-gvpC-gvpN-gvpO) allows H.volcanii to produce gas vesicles. All site-directed mutagenesis is tested in H.volcanii. This Halobacterium salinarum (strain ATCC 700922 / JCM 11081 / NRC-1) (Halobacterium halobium) protein is Transcriptional activator GvpE2.